The sequence spans 222 residues: Glutathione S-transferase (222 aa).

The region spanning 3-83 (GKPKLHYTRG…YIAGKYNLYG (81 aa)) is the GST N-terminal domain. Glutathione is bound by residues Tyr9, Arg45, 54-55 (QV), and 67-68 (QS). A GST C-terminal domain is found at 85-208 (DLKERAWIDM…QPGSQRKPPL (124 aa)).

This sequence belongs to the GST superfamily. Alpha family. Homodimer.

The protein localises to the cytoplasm. It catalyses the reaction RX + glutathione = an S-substituted glutathione + a halide anion + H(+). Its function is as follows. Conjugation of reduced glutathione to a wide number of exogenous and endogenous hydrophobic electrophiles. This chain is Glutathione S-transferase, found in Gallus gallus (Chicken).